A 666-amino-acid chain; its full sequence is Probable potassium transport system protein Kup (666 aa).

12 consecutive transmembrane segments (helical) span residues Gly16–Met36, Ile58–Leu78, Pro100–Thr120, Ile141–Gly161, Phe165–Leu185, Ile221–Leu241, Trp253–Ala273, Leu292–Ile312, Leu343–Phe363, Tyr373–Ile393, Pro399–Ala419, and Phe424–Ile444.

This sequence belongs to the HAK/KUP transporter (TC 2.A.72) family.

It is found in the cell membrane. The catalysed reaction is K(+)(in) + H(+)(in) = K(+)(out) + H(+)(out). In terms of biological role, transport of potassium into the cell. Likely operates as a K(+):H(+) symporter. In Streptococcus pyogenes serotype M5 (strain Manfredo), this protein is Probable potassium transport system protein Kup.